A 503-amino-acid polypeptide reads, in one-letter code: MDLIPSFSTETWLLLAISLVLLYLYGTYTHGIFRKLGIPGPTPLPFVGTALGYRNGFYVFDMKCFSKYGRMWGFYDGRQPVLAITDPDMIKTVLVKECYSVFTNRRTLGPVGFMKSAISLSEDEEWKRMRTLLSPTFTTGKLKEMFPIIGQYGDVLVNNLRKEAEKGKAINLKDVFGAYSMDVITSTSFGVNIDSLNHPQDPFVENTKKLLKFDFLDPFFFSILLFPFLTPVFEILNIWLFPKKVTDFFRKSVERMKESRLKDKQKHRVDFLQLMINSQNSKEMDTHKALSDLELVAQSIIFIFAGYETTSTSLSFLMYELATHPDVQQKLQEEIDATFPNKALPTYDALVQMEYLDMVLNETLRLYPIAGRLERVCKKDVEISGVFIPKGTVVMVPTFTLHRDQSLWPEPEEFRPERFSRKNKDSINPYTYLPFGTGPRNCIGMRFAIMNMKLALVRVLQNFSFKPCKETQIPLKLNAQGIIQPEKPIVLKVEPRDGSVNGA.

Cys-442 contributes to the heme binding site.

This sequence belongs to the cytochrome P450 family. It depends on heme as a cofactor.

It localises to the endoplasmic reticulum membrane. The protein resides in the microsome membrane. It carries out the reaction an organic molecule + reduced [NADPH--hemoprotein reductase] + O2 = an alcohol + oxidized [NADPH--hemoprotein reductase] + H2O + H(+). Cytochromes P450 are a group of heme-thiolate monooxygenases. In liver microsomes, this enzyme is involved in an NADPH-dependent electron transport pathway. It oxidizes a variety of structurally unrelated compounds, including steroids, fatty acids, and xenobiotics. The polypeptide is Cytochrome P450 3A12 (CYP3A12) (Canis lupus familiaris (Dog)).